The primary structure comprises 547 residues: Hydroxylamine reductase (547 aa).

Residues Cys5, Cys8, Cys17, and Cys23 each contribute to the [4Fe-4S] cluster site. Hybrid [4Fe-2O-2S] cluster-binding residues include His242, Glu266, Cys310, Cys401, Cys429, Cys454, Glu489, and Lys491. Cys401 is subject to Cysteine persulfide.

It belongs to the HCP family. Requires [4Fe-4S] cluster as cofactor. Hybrid [4Fe-2O-2S] cluster serves as cofactor.

It is found in the cytoplasm. It carries out the reaction A + NH4(+) + H2O = hydroxylamine + AH2 + H(+). In terms of biological role, catalyzes the reduction of hydroxylamine to form NH(3) and H(2)O. In Thermoanaerobacter pseudethanolicus (strain ATCC 33223 / 39E) (Clostridium thermohydrosulfuricum), this protein is Hydroxylamine reductase.